Consider the following 251-residue polypeptide: Ubiquinone/menaquinone biosynthesis C-methyltransferase UbiE (251 aa).

Residues Thr-74, Asp-95, 123–124, and Ser-140 each bind S-adenosyl-L-methionine; that span reads NA.

Belongs to the class I-like SAM-binding methyltransferase superfamily. MenG/UbiE family.

It catalyses the reaction a 2-demethylmenaquinol + S-adenosyl-L-methionine = a menaquinol + S-adenosyl-L-homocysteine + H(+). The catalysed reaction is a 2-methoxy-6-(all-trans-polyprenyl)benzene-1,4-diol + S-adenosyl-L-methionine = a 5-methoxy-2-methyl-3-(all-trans-polyprenyl)benzene-1,4-diol + S-adenosyl-L-homocysteine + H(+). It participates in quinol/quinone metabolism; menaquinone biosynthesis; menaquinol from 1,4-dihydroxy-2-naphthoate: step 2/2. The protein operates within cofactor biosynthesis; ubiquinone biosynthesis. In terms of biological role, methyltransferase required for the conversion of demethylmenaquinol (DMKH2) to menaquinol (MKH2) and the conversion of 2-polyprenyl-6-methoxy-1,4-benzoquinol (DDMQH2) to 2-polyprenyl-3-methyl-6-methoxy-1,4-benzoquinol (DMQH2). This Pectobacterium carotovorum subsp. carotovorum (strain PC1) protein is Ubiquinone/menaquinone biosynthesis C-methyltransferase UbiE.